Consider the following 623-residue polypeptide: Negative regulator of PDR1-mediated fluconazole resistance JJJ1 (623 aa).

A J domain is found at 4-70; sequence CYYDLLEVRS…QERAWYDSHK (67 aa). The C2H2-type zinc-finger motif lies at 363-387; sequence YDCFICKKSFKSEKQLENHIKTKLH. Disordered regions lie at residues 448-476, 499-581, and 599-623; these read QSSV…KLSN, GADN…NDAK, and SHIQ…KKNK. Over residues 453–466 the composition is skewed to acidic residues; sequence DSEDFTDDNNDTED. Polar residues predominate over residues 499-508; sequence GADNSETQNA. Over residues 525 to 538 the composition is skewed to basic and acidic residues; the sequence is ELTRILRELEESKT. Composition is skewed to basic residues over residues 553–564 and 612–623; these read KKKTKAKKKKNK and KVKKGKRSKKNK.

The protein localises to the nucleus. Acts as a negative regulator of fluconazole resistance, primarily through down-regulation of the ABC transporter gene CDR1 via inactivation of the PDR1 transcriptional pathway. In Candida glabrata (strain ATCC 2001 / BCRC 20586 / JCM 3761 / NBRC 0622 / NRRL Y-65 / CBS 138) (Yeast), this protein is Negative regulator of PDR1-mediated fluconazole resistance JJJ1.